We begin with the raw amino-acid sequence, 702 residues long: 1,4-alpha-glucan-branching enzyme (702 aa).

Residue alanine 2 is modified to N-acetylalanine. Substrate contacts are provided by residues 62–63 (NE) and 91–93 (WAP). Tryptophan 107 contacts (1,4-alpha-D-glucosyl)n. Position 118-121 (118-121 (EYGK)) interacts with substrate. (1,4-alpha-D-glucosyl)n is bound at residue lysine 143. Tyrosine 173 is subject to Phosphotyrosine. 333 to 336 (EVLR) contacts substrate. Catalysis depends on aspartate 357, which acts as the Nucleophile. Glutamate 412 (proton donor) is an active-site residue.

Belongs to the glycosyl hydrolase 13 family. GlgB subfamily. As to quaternary structure, monomer.

The catalysed reaction is Transfers a segment of a (1-&gt;4)-alpha-D-glucan chain to a primary hydroxy group in a similar glucan chain.. Its pathway is glycan biosynthesis; glycogen biosynthesis. In terms of biological role, glycogen-branching enzyme participates in the glycogen biosynthetic process along with glycogenin and glycogen synthase. Generates alpha-1,6-glucosidic branches from alpha-1,4-linked glucose chains, to increase solubility of the glycogen polymer. The protein is 1,4-alpha-glucan-branching enzyme (Gbe1) of Mus musculus (Mouse).